Here is a 263-residue protein sequence, read N- to C-terminus: Type III pantothenate kinase (263 aa).

Position 9-16 (9-16) interacts with ATP; it reads DIGNTSIK. Residues tyrosine 103 and 110-113 contribute to the substrate site; that span reads GADR. Aspartate 112 (proton acceptor) is an active-site residue. Aspartate 134 contributes to the K(+) binding site. Threonine 137 is a binding site for ATP. Threonine 190 provides a ligand contact to substrate.

It belongs to the type III pantothenate kinase family. Homodimer. It depends on NH4(+) as a cofactor. The cofactor is K(+).

It is found in the cytoplasm. It catalyses the reaction (R)-pantothenate + ATP = (R)-4'-phosphopantothenate + ADP + H(+). It functions in the pathway cofactor biosynthesis; coenzyme A biosynthesis; CoA from (R)-pantothenate: step 1/5. In terms of biological role, catalyzes the phosphorylation of pantothenate (Pan), the first step in CoA biosynthesis. This Desulfovibrio desulfuricans (strain ATCC 27774 / DSM 6949 / MB) protein is Type III pantothenate kinase.